Consider the following 366-residue polypeptide: Histidinol-phosphate aminotransferase 2 (366 aa).

Over residues 1–11 (MQVKDQLSSLQ) the composition is skewed to polar residues. Residues 1–21 (MQVKDQLSSLQPYKPGKSPEQ) are disordered. Lys-222 carries the N6-(pyridoxal phosphate)lysine modification.

It belongs to the class-II pyridoxal-phosphate-dependent aminotransferase family. Histidinol-phosphate aminotransferase subfamily. As to quaternary structure, homodimer. The cofactor is pyridoxal 5'-phosphate.

The enzyme catalyses L-histidinol phosphate + 2-oxoglutarate = 3-(imidazol-4-yl)-2-oxopropyl phosphate + L-glutamate. The protein operates within amino-acid biosynthesis; L-histidine biosynthesis; L-histidine from 5-phospho-alpha-D-ribose 1-diphosphate: step 7/9. This chain is Histidinol-phosphate aminotransferase 2 (hisC2), found in Bacillus cereus (strain ATCC 14579 / DSM 31 / CCUG 7414 / JCM 2152 / NBRC 15305 / NCIMB 9373 / NCTC 2599 / NRRL B-3711).